Here is a 258-residue protein sequence, read N- to C-terminus: Indole-3-glycerol phosphate synthase 2 (258 aa).

This sequence belongs to the TrpC family.

It carries out the reaction 1-(2-carboxyphenylamino)-1-deoxy-D-ribulose 5-phosphate + H(+) = (1S,2R)-1-C-(indol-3-yl)glycerol 3-phosphate + CO2 + H2O. Its pathway is amino-acid biosynthesis; L-tryptophan biosynthesis; L-tryptophan from chorismate: step 4/5. Functionally, the function of the second trp operon in S.coelicolor is to produce tryptophan for the biosynthesis of calcium-dependent antibiotic (CDA). This is Indole-3-glycerol phosphate synthase 2 (trpC2) from Streptomyces coelicolor (strain ATCC BAA-471 / A3(2) / M145).